A 337-amino-acid polypeptide reads, in one-letter code: MRNITTSAYTPTEFTIENISDTVAKISAWPFEIGYGITLAHPLRRLLYTSTIGYAPTAIHIDGVAHEFDSMRGMLEDVALFIINLKKLRFKIKGDSNKEIVEFSFKGSKEIYGKDLNNDQVEVVNKDAYLATINEDAELKFTLIVEKGIGYVPSEEIKELINDPKFIALDAFFTPVREATYDIEKVLFEDNPDYEKVVLTVTTDGQITPNEAFQNALEAMYKQLSVFDKITNVRSVIKNQATSNELENTKLLQNITDLNLSARSYNCLEKAGVVYIGELALMSVSELAGLKNLGKKSLDEIKNIMESIGFPVGTSKLSDNKEILKNKIAELKAQNEG.

The tract at residues 1-231 (MRNITTSAYT…KQLSVFDKIT (231 aa)) is alpha N-terminal domain (alpha-NTD). The alpha C-terminal domain (alpha-CTD) stretch occupies residues 247-337 (ENTKLLQNIT…IAELKAQNEG (91 aa)).

Belongs to the RNA polymerase alpha chain family. As to quaternary structure, homodimer. The RNAP catalytic core consists of 2 alpha, 1 beta, 1 beta' and 1 omega subunit. When a sigma factor is associated with the core the holoenzyme is formed, which can initiate transcription.

The enzyme catalyses RNA(n) + a ribonucleoside 5'-triphosphate = RNA(n+1) + diphosphate. DNA-dependent RNA polymerase catalyzes the transcription of DNA into RNA using the four ribonucleoside triphosphates as substrates. The sequence is that of DNA-directed RNA polymerase subunit alpha from Campylobacter jejuni subsp. jejuni serotype O:2 (strain ATCC 700819 / NCTC 11168).